The chain runs to 279 residues: 2-dehydro-3-deoxyphosphooctonate aldolase (279 aa).

The protein belongs to the KdsA family.

The protein localises to the cytoplasm. It carries out the reaction D-arabinose 5-phosphate + phosphoenolpyruvate + H2O = 3-deoxy-alpha-D-manno-2-octulosonate-8-phosphate + phosphate. The protein operates within carbohydrate biosynthesis; 3-deoxy-D-manno-octulosonate biosynthesis; 3-deoxy-D-manno-octulosonate from D-ribulose 5-phosphate: step 2/3. It functions in the pathway bacterial outer membrane biogenesis; lipopolysaccharide biosynthesis. The protein is 2-dehydro-3-deoxyphosphooctonate aldolase of Methylobacillus flagellatus (strain ATCC 51484 / DSM 6875 / VKM B-1610 / KT).